The primary structure comprises 283 residues: Shikimate dehydrogenase (NADP(+)) (283 aa).

Shikimate is bound by residues S18 to S20 and T66. K70 functions as the Proton acceptor in the catalytic mechanism. 2 residues coordinate shikimate: N91 and D106. NADP(+)-binding positions include G130–A134 and M225. Y227 provides a ligand contact to shikimate. An NADP(+)-binding site is contributed by G248.

The protein belongs to the shikimate dehydrogenase family. As to quaternary structure, homodimer.

It catalyses the reaction shikimate + NADP(+) = 3-dehydroshikimate + NADPH + H(+). Its pathway is metabolic intermediate biosynthesis; chorismate biosynthesis; chorismate from D-erythrose 4-phosphate and phosphoenolpyruvate: step 4/7. Functionally, involved in the biosynthesis of the chorismate, which leads to the biosynthesis of aromatic amino acids. Catalyzes the reversible NADPH linked reduction of 3-dehydroshikimate (DHSA) to yield shikimate (SA). The sequence is that of Shikimate dehydrogenase (NADP(+)) from Pelodictyon phaeoclathratiforme (strain DSM 5477 / BU-1).